Consider the following 307-residue polypeptide: Methionyl-tRNA formyltransferase (307 aa).

108–111 (SLLP) provides a ligand contact to (6S)-5,6,7,8-tetrahydrofolate.

It belongs to the Fmt family.

It catalyses the reaction L-methionyl-tRNA(fMet) + (6R)-10-formyltetrahydrofolate = N-formyl-L-methionyl-tRNA(fMet) + (6S)-5,6,7,8-tetrahydrofolate + H(+). Functionally, attaches a formyl group to the free amino group of methionyl-tRNA(fMet). The formyl group appears to play a dual role in the initiator identity of N-formylmethionyl-tRNA by promoting its recognition by IF2 and preventing the misappropriation of this tRNA by the elongation apparatus. In Stenotrophomonas maltophilia (strain K279a), this protein is Methionyl-tRNA formyltransferase.